A 419-amino-acid chain; its full sequence is Copalyl diphosphate synthase 2, chloroplastic (419 aa).

Position 82 (K82) interacts with substrate.

This sequence belongs to the terpene synthase family. Tpsc subfamily. Mg(2+) is required as a cofactor. In terms of tissue distribution, ubiquitous expression in roots, stems, leaves and flowers.

It is found in the plastid. The protein resides in the chloroplast. It catalyses the reaction (2E,6E,10E)-geranylgeranyl diphosphate = (+)-copalyl diphosphate. It functions in the pathway secondary metabolite biosynthesis; terpenoid biosynthesis. Its function is as follows. Involved in the biosynthesis of ent-kaurene diterpenoids natural products such as oridonin, miltiradiene, eriocalyxin B and nezukol, known to exhibit antitumor, anti-inflammatory and antibacterial activities. Catalyzes the conversion of (2E,6E,10E)-geranylgeranyl diphosphate (GGPP) to (+)-copalyl diphosphate ((+)-CPP). The sequence is that of Copalyl diphosphate synthase 2, chloroplastic from Isodon rubescens (Rabdosia rubescens).